The primary structure comprises 312 residues: Pectin lyase (312 aa).

Arg201 is a catalytic residue. Residues Gly254 to Lys274 are disordered. Over residues Gly256–Lys274 the composition is skewed to polar residues.

The protein belongs to the polysaccharide lyase 1 family.

The catalysed reaction is Eliminative cleavage of (1-&gt;4)-alpha-D-galacturonan methyl ester to give oligosaccharides with 4-deoxy-6-O-methyl-alpha-D-galact-4-enuronosyl groups at their non-reducing ends.. This is Pectin lyase (pnl) from Pseudomonas marginalis (Pseudomonas panacis).